The chain runs to 1929 residues: Myoferlin (1929 aa).

The segment at 1–53 is disordered; it reads MISYEPPPSAISNPTDPGGTTIIQGDGENDEEEDRDIVDAGFNPSVPGAPGQT. Residues 27-36 are compositionally biased toward acidic residues; that stretch reads GENDEEEDRD. C2 domains are found at residues 62–179 and 218–354; these read VKGK…RKWV and EDDD…EEYD. Ca(2+) contacts are provided by Asp-267, Asp-275, Asp-323, Asp-325, and Asp-331. A compositionally biased stretch (basic residues) spans 898–907; that stretch reads RRLVRKRKKD. Residues 898-918 form a disordered region; it reads RRLVRKRKKDPKVSTTSKAAL. 4 C2 domains span residues 996-1124, 1159-1283, 1408-1527, and 1645-1793; these read GANT…LLWY, RAPQ…TKHE, IPYP…SHCG, and GPPG…EKCS. The Ca(2+) site is built by Asp-1028, Asp-1034, Asp-1090, and Asp-1092. Positions 1442, 1448, 1497, 1499, 1764, 1767, and 1770 each coordinate Ca(2+). Residues 1845–1858 show a composition bias toward basic and acidic residues; it reads DAEERPAGKGRDEP. Residues 1845-1867 are disordered; that stretch reads DAEERPAGKGRDEPNMNPKLDPP. The helical transmembrane segment at 1894-1914 threads the bilayer; the sequence is WVFIGLIILLLVLLFLGVFFY.

The protein belongs to the ferlin family. It depends on Ca(2+) as a cofactor.

The protein resides in the cell membrane. The protein localises to the nucleus membrane. It localises to the cytoplasmic vesicle membrane. In terms of biological role, may play a role in membrane regeneration and repair. The protein is Myoferlin (myof) of Xenopus tropicalis (Western clawed frog).